The primary structure comprises 129 residues: MRLFHRLLMATPSTMGSKSSLSEALALLPPLQLYRRILRVHRRKLDPEMRILGDSYVKSEFRAHRNVENPLHIIGFLTEWQLYAQKLEGDAWVGEKLDKSKLDKMSDQQIGQLYELMQAIKNPEGEGKE.

This sequence belongs to the complex I LYR family. SDHAF3 subfamily. As to quaternary structure, interacts with the iron-sulfur protein subunit within the SDH catalytic dimer.

The protein localises to the mitochondrion matrix. Its function is as follows. Plays an essential role in the assembly of succinate dehydrogenase (SDH), an enzyme complex (also referred to as respiratory complex II) that is a component of both the tricarboxylic acid (TCA) cycle and the mitochondrial electron transport chain, and which couples the oxidation of succinate to fumarate with the reduction of ubiquinone (coenzyme Q) to ubiquinol. Promotes maturation of the iron-sulfur protein subunit of the SDH catalytic dimer, protecting it from the deleterious effects of oxidants. May act together with SDHAF1. This is Succinate dehydrogenase assembly factor 3, mitochondrial from Aspergillus fumigatus (strain ATCC MYA-4609 / CBS 101355 / FGSC A1100 / Af293) (Neosartorya fumigata).